Reading from the N-terminus, the 878-residue chain is MERSFTVECPPFEVEISHWDRILPPTHSKRILCFSLPETTDKEKVVEQLHIAFHHTVQRLPLLAGSVVPFSSHQGGRPWLRNIIPEGGAQLIVKDLSEELRFSDLAKTNFSQHLLNTEQLCPLPEVGYFKNESVDVCRFQANFIEGGLLLVVSIIHNAADGRGVTEVIKIFANELSKAQSGETHYPLEPRPDVYRTDRTKLVSGHGVPGSIENHAAWTSDPANAHAQIHNVENSCRTFRISVKALSDLKKSLSATSRGPDEWFSTNDAISAFIWRSIMLARHRAGILNGDAETYVAQPVDCRPHLEIPMPYFGNVIYMTKSSVPLSDLADFESGLGAAARALRADIKGVTAEKFRDLVGYAERTALETHTRLNILEAMSTSGIILTSLFKMDLHGMNFGPIFGDGHIKALRLPARGTQAGAVIVLPRVPDGSCEFMVTEQESTIKCLLEDEYFSRFTNDADSIGASSEEVVAPLPQPPITSEEGMISIDSTPPVIEAITIKSAPDIEPVTIEAATTEVEPITIKSISDTETVTIGITTTEVGPASTEATSPVVEPSTMESDLVEPVTVGTTNSEVESVTTETTASKVQALTTISKEWHLVPAGDVKMPSTLISNRIDAPQVGTIKIIQLNRPAAKNALSVQMVHELSCEIEEIHNERHMGGTRALVIASAVDGVFCAGADLKERKDMSLTETQAFLTSLRGLYSRLAALPIPTIACVSGHALGGGLELALCCHLRVFASNAVAALPETRLAIIPGAGGTYRLPNIVGMSNALDMILTGRGVPASEAAKMGLCNRLVGADGSEDTQAFSNRVLALETGIQLAEQISDAGPIAIRAAIRALSYSCEAVENAAYESVLTTKDRKAALAAFSEKRKPILVGE.

The disordered stretch occupies residues 541-561; that stretch reads VGPASTEATSPVVEPSTMESD. Substrate-binding positions include 677 to 681 and glycine 724; that span reads AGADL.

Belongs to the enoyl-CoA hydratase/isomerase family.

It functions in the pathway secondary metabolite biosynthesis. In terms of biological role, enoyl-CoA isomerase/hydratase; part of the cla gene cluster that produces clavatol and ortho-quinone methide. The clavatol biosynthesis cluster cla and the terrestric acid cluster tra are both involved in the production of peniphenones and penilactones. The non-reducing PKS claF is responsible for the formation of clavatol from successive condensations of 3 malonyl-CoA units, presumably with a simple acetyl-CoA starter unit, and 2 methylation steps. The esterase claE probably collaborates with claF by catalyzing the hydrolysis of ACP-bound acyl intermediates to free the ACP from stalled intermediates. The clavatol oxidase claD then converts clavatol to hydroxyclavatol. Spontaneous dehydration of hydroxyclavatol leads to the accumulation of the highly active ortho-quinone methide. On the other hand, the PKS-NRPS hybrid traA is involved in the formation of crustosic acid, with the help of traB and traD. The polyketide synthase module (PKS) of traA is responsible for the synthesis of the polyketide backbone via the condensation of an acetyl-CoA starter unit with 3 malonyl-CoA units. The downstream nonribosomal peptide synthetase (NRPS) module then amidates the carboxyl end of the polyketide with L-malic acid. Because traA lacks a designated enoylreductase (ER) domain, the required activity is provided the enoyl reductase traG. Crustosic acid undergoes decarboxylation and isomerization to the terrestric acid, catalyzed by the 2-oxoglutarate-dependent dioxygenase traH. Both acids are further converted to the 2 gamma-butyrolactones (R)-5-methyltetronic acid and (S)-5-carboxylmethyltetronic acid, with involvement of the cytochrome P450 monooxygenase claJ. Spontaneous addition of the methide to these gamma-butyrolactones leads to peniphenone D and penilactone D, which undergo again stereospecific attacking by methide to give penilactones A and B. The function of the enoyl-CoA isomerase/hydratase claC has not been investigated yet. The sequence is that of Enoyl-CoA isomerase/hydratase claC from Penicillium crustosum (Blue mold fungus).